Consider the following 403-residue polypeptide: CinA-like protein (403 aa).

The protein belongs to the CinA family.

The protein is CinA-like protein of Petrotoga mobilis (strain DSM 10674 / SJ95).